The primary structure comprises 514 residues: Respiratory nitrate reductase 2 beta chain (514 aa).

4Fe-4S ferredoxin-type domains are found at residues 7-35 (VGMV…GREG), 174-205 (TFMM…KREE), and 207-236 (GIVL…FNWK). [4Fe-4S] cluster-binding residues include Cys-16, Cys-19, Cys-22, Cys-26, Cys-183, Cys-186, and Cys-191. 3 residues coordinate [3Fe-4S] cluster: Cys-195, Cys-216, and Cys-222. The [4Fe-4S] cluster site is built by Cys-226, Cys-243, Cys-246, Cys-258, and Cys-262.

Dimer of heterotrimers each composed of an alpha, a beta and a gamma chain. Alpha and beta are catalytic chains; gamma chains are involved in binding the enzyme complex to the cytoplasmic membrane. The cofactor is [4Fe-4S] cluster. [3Fe-4S] cluster serves as cofactor.

It is found in the cell membrane. It catalyses the reaction nitrate + a quinol = a quinone + nitrite + H2O. Its function is as follows. This is a second nitrate reductase enzyme which can substitute for the NRA enzyme and allows E.coli to use nitrate as an electron acceptor during anaerobic growth. The beta chain is an electron transfer unit containing four cysteine clusters involved in the formation of iron-sulfur centers. Electrons are transferred from the gamma chain to the molybdenum cofactor of the alpha subunit. This chain is Respiratory nitrate reductase 2 beta chain (narY), found in Escherichia coli (strain K12).